Here is a 164-residue protein sequence, read N- to C-terminus: SsrA-binding protein (164 aa).

Belongs to the SmpB family.

Its subcellular location is the cytoplasm. Required for rescue of stalled ribosomes mediated by trans-translation. Binds to transfer-messenger RNA (tmRNA), required for stable association of tmRNA with ribosomes. tmRNA and SmpB together mimic tRNA shape, replacing the anticodon stem-loop with SmpB. tmRNA is encoded by the ssrA gene; the 2 termini fold to resemble tRNA(Ala) and it encodes a 'tag peptide', a short internal open reading frame. During trans-translation Ala-aminoacylated tmRNA acts like a tRNA, entering the A-site of stalled ribosomes, displacing the stalled mRNA. The ribosome then switches to translate the ORF on the tmRNA; the nascent peptide is terminated with the 'tag peptide' encoded by the tmRNA and targeted for degradation. The ribosome is freed to recommence translation, which seems to be the essential function of trans-translation. The chain is SsrA-binding protein from Gluconobacter oxydans (strain 621H) (Gluconobacter suboxydans).